Here is a 328-residue protein sequence, read N- to C-terminus: Ketol-acid reductoisomerase (NADP(+)) (328 aa).

In terms of domain architecture, KARI N-terminal Rossmann spans 1 to 181 (MKIYYENDID…GLARAGVLET (181 aa)). NADP(+)-binding positions include 24 to 27 (YGSQ), Arg-47, Ser-52, and 82 to 85 (DEIQ). His-107 is a catalytic residue. An NADP(+)-binding site is contributed by Gly-133. One can recognise a KARI C-terminal knotted domain in the interval 182 to 327 (TFREETETDL…SKLRKLCGLE (146 aa)). Mg(2+) contacts are provided by Asp-190, Glu-194, Glu-226, and Glu-230. Ser-251 is a substrate binding site.

The protein belongs to the ketol-acid reductoisomerase family. It depends on Mg(2+) as a cofactor.

The enzyme catalyses (2R)-2,3-dihydroxy-3-methylbutanoate + NADP(+) = (2S)-2-acetolactate + NADPH + H(+). It carries out the reaction (2R,3R)-2,3-dihydroxy-3-methylpentanoate + NADP(+) = (S)-2-ethyl-2-hydroxy-3-oxobutanoate + NADPH + H(+). The protein operates within amino-acid biosynthesis; L-isoleucine biosynthesis; L-isoleucine from 2-oxobutanoate: step 2/4. It participates in amino-acid biosynthesis; L-valine biosynthesis; L-valine from pyruvate: step 2/4. In terms of biological role, involved in the biosynthesis of branched-chain amino acids (BCAA). Catalyzes an alkyl-migration followed by a ketol-acid reduction of (S)-2-acetolactate (S2AL) to yield (R)-2,3-dihydroxy-isovalerate. In the isomerase reaction, S2AL is rearranged via a Mg-dependent methyl migration to produce 3-hydroxy-3-methyl-2-ketobutyrate (HMKB). In the reductase reaction, this 2-ketoacid undergoes a metal-dependent reduction by NADPH to yield (R)-2,3-dihydroxy-isovalerate. This Methanothermobacter thermautotrophicus (strain ATCC 29096 / DSM 1053 / JCM 10044 / NBRC 100330 / Delta H) (Methanobacterium thermoautotrophicum) protein is Ketol-acid reductoisomerase (NADP(+)).